Here is a 976-residue protein sequence, read N- to C-terminus: Mast/stem cell growth factor receptor kita (976 aa).

The N-terminal stretch at M1–S21 is a signal peptide. Topologically, residues R22–P515 are extracellular. 5 Ig-like C2-type domains span residues P23–K105, I100–R199, P206–N301, I308–H402, and F399–S504. Residues N39 and N47 are each glycosylated (N-linked (GlcNAc...) asparagine). Disulfide bonds link C44/C89, C131/C180, C146/C177, and C228/C285. 6 N-linked (GlcNAc...) asparagine glycosylation sites follow: N282, N309, N315, N352, N449, and N477. The cysteines at positions 422 and 488 are disulfide-linked. A helical membrane pass occupies residues L516–Y536. Over K537–V976 the chain is Cytoplasmic. Position 559 (Y559) interacts with Mg(2+). 2 positions are modified to phosphotyrosine; by autocatalysis: Y559 and Y561. A Protein kinase domain is found at L580 to L922. ATP is bound by residues G587 to V594, K614, and E662 to D668. A phosphotyrosine; by autocatalysis mark is found at Y691 and Y707. D777 (proton acceptor) is an active-site residue. R781 lines the ATP pocket. N782 and D795 together coordinate Mg(2+). Phosphotyrosine; by autocatalysis occurs at positions 808 and 921. The interval P929–V976 is disordered. Residues S947–V976 are compositionally biased toward polar residues.

The protein belongs to the protein kinase superfamily. Tyr protein kinase family. CSF-1/PDGF receptor subfamily. In terms of processing, ubiquitinated. Rapidly ubiquitinated after autophosphorylation induced by kitlg/scf binding, leading to internalization and degradation. Autophosphorylated on tyrosine residues. Phosphorylated tyrosine residues are important for interaction with specific binding partners. Expressed in cells of the neural crest-melanocyte lineage. In the embryo, also expressed in mesodermal cells that give rise to hematopoietic precursors, notochord, neural crest-derived cells of the branchial arches, pineal gland, retina and mechanoreceptive sensory cells of lateral line neuromasts. Not detected in primordial germ cells or larval gut.

The protein localises to the cell membrane. The catalysed reaction is L-tyrosyl-[protein] + ATP = O-phospho-L-tyrosyl-[protein] + ADP + H(+). Tyrosine-protein kinase that acts as a cell-surface receptor for the cytokine kitlg/scf and plays a role in the regulation of cell survival and proliferation, hematopoiesis, stem cell maintenance, gametogenesis, and in mast cell development, migration and function. Required for the migration of cells in the melanocyte lineage and the survival of embryonic melanocytes. Required for the differentiation of some, but not all, melanocytes. Not essential for hematopoiesis or primordial germ cell development. The polypeptide is Mast/stem cell growth factor receptor kita (kita) (Danio rerio (Zebrafish)).